We begin with the raw amino-acid sequence, 96 residues long: Molybdopterin synthase sulfur carrier subunit (96 aa).

Gly96 is subject to 1-thioglycine; alternate. Gly96 is subject to Glycyl adenylate; alternate.

The protein belongs to the MoaD family. MOCS2A subfamily. In terms of assembly, heterotetramer; composed of 2 small (MOCS2A) and 2 large (MOCS2B) subunits. In terms of processing, C-terminal thiocarboxylation occurs in 2 steps, it is first acyl-adenylated (-COAMP) via the hesA/moeB/thiF part of MOCS3, then thiocarboxylated (-COSH) via the rhodanese domain of MOCS3.

Its subcellular location is the cytoplasm. It functions in the pathway cofactor biosynthesis; molybdopterin biosynthesis. Functionally, acts as a sulfur carrier required for molybdopterin biosynthesis. Component of the molybdopterin synthase complex that catalyzes the conversion of precursor Z into molybdopterin by mediating the incorporation of 2 sulfur atoms into precursor Z to generate a dithiolene group. In the complex, serves as sulfur donor by being thiocarboxylated (-COSH) at its C-terminus by MOCS3. After interaction with MOCS2B, the sulfur is then transferred to precursor Z to form molybdopterin. The polypeptide is Molybdopterin synthase sulfur carrier subunit (Arabidopsis thaliana (Mouse-ear cress)).